Here is a 758-residue protein sequence, read N- to C-terminus: Probable serine/threonine-protein kinase HAL5-like (758 aa).

Disordered regions lie at residues 1–170 (MGTV…SADD) and 189–252 (IDNA…HRGR). Residues 22-57 (RSISGSIKSLFKPSSVQNSTPTVSPHESSPPLGNSD) show a composition bias toward polar residues. Residues 58–69 (NLKKLVDTKRAE) show a composition bias toward basic and acidic residues. Over residues 129–153 (SSPRQSSSTNDRSSITSATSSVTSA) the composition is skewed to low complexity. The span at 216-226 (DKNFESSEYEI) shows a compositional bias: basic and acidic residues. The segment covering 227–247 (RSNSLSRIHSTPQNESPTVNN) has biased composition (polar residues). Residues 442 to 744 (KSMGVVLGHG…IDQLLQSPWM (303 aa)) form the Protein kinase domain. ATP contacts are provided by residues 448 to 456 (LGHGAYGVV) and Lys485. The active-site Proton acceptor is Asp595.

This sequence belongs to the protein kinase superfamily. CAMK Ser/Thr protein kinase family. NPR/HAL subfamily. HAL5 sub-subfamily.

The enzyme catalyses L-seryl-[protein] + ATP = O-phospho-L-seryl-[protein] + ADP + H(+). The catalysed reaction is L-threonyl-[protein] + ATP = O-phospho-L-threonyl-[protein] + ADP + H(+). The chain is Probable serine/threonine-protein kinase HAL5-like from Vanderwaltozyma polyspora (strain ATCC 22028 / DSM 70294 / BCRC 21397 / CBS 2163 / NBRC 10782 / NRRL Y-8283 / UCD 57-17) (Kluyveromyces polysporus).